The primary structure comprises 343 residues: Sulfate/thiosulfate import ATP-binding protein CysA (343 aa).

In terms of domain architecture, ABC transporter spans 3–237; sequence IRISHLRKQF…PASPFVYSFV (235 aa). 35 to 42 contributes to the ATP binding site; it reads GPSGSGKT.

This sequence belongs to the ABC transporter superfamily. Sulfate/tungstate importer (TC 3.A.1.6) family. As to quaternary structure, the complex is composed of two ATP-binding proteins (CysA), two transmembrane proteins (CysT and CysW) and a solute-binding protein (CysP).

It localises to the cell inner membrane. It carries out the reaction sulfate(out) + ATP + H2O = sulfate(in) + ADP + phosphate + H(+). The catalysed reaction is thiosulfate(out) + ATP + H2O = thiosulfate(in) + ADP + phosphate + H(+). Part of the ABC transporter complex CysAWTP involved in sulfate/thiosulfate import. Responsible for energy coupling to the transport system. The polypeptide is Sulfate/thiosulfate import ATP-binding protein CysA (Xanthomonas campestris pv. campestris (strain ATCC 33913 / DSM 3586 / NCPPB 528 / LMG 568 / P 25)).